The sequence spans 174 residues: UPF0664 stress-induced protein C29B12.11c (174 aa).

A disordered region spans residues His-147–Ser-174. Over residues Pro-165 to Ser-174 the composition is skewed to basic and acidic residues.

It belongs to the UPF0664 family.

Its subcellular location is the cytoplasm. It is found in the nucleus. This chain is UPF0664 stress-induced protein C29B12.11c, found in Schizosaccharomyces pombe (strain 972 / ATCC 24843) (Fission yeast).